The chain runs to 225 residues: Insulin-induced gene 2 protein (225 aa).

Topologically, residues 1–28 are cytoplasmic; sequence MAEGETKSPGPKKCGPYISSVTSQSVNL. The chain crosses the membrane as a helical span at residues 29–51; the sequence is MIRGVVLFFIGVFLALVLNLLQI. The Lumenal segment spans residues 52–70; sequence QRNVTLFPPDVIASIFSSA. Residues 71 to 88 traverse the membrane as a helical segment; sequence WWVPPCCGTASAVIGLLY. The Cytoplasmic segment spans residues 89 to 103; sequence PCIDRHLGEPHKFKR. The chain crosses the membrane as a helical span at residues 104–126; it reads EWSSVMRCVAVFVGINHASAKVD. The Lumenal portion of the chain corresponds to 127-129; it reads FDN. A helical membrane pass occupies residues 130–148; that stretch reads NIQLSLTLAALSIGLWWTF. At 149-153 the chain is on the cytoplasmic side; sequence DRSRS. Position 151 is a phosphoserine (S151). The chain crosses the membrane as a helical span at residues 154–175; that stretch reads GFGLGVGIAFLATVVTQLLVYN. The Lumenal portion of the chain corresponds to 176-189; sequence GVYQYTSPDFLYVR. A helical transmembrane segment spans residues 190 to 207; that stretch reads SWLPCIFFAGGITMGNIG. Topologically, residues 208–225 are cytoplasmic; it reads RQLAMYECKVIAEKSHQE. Residue C215 is modified to Cysteine sulfenic acid (-SOH); alternate. C215 participates in a covalent cross-link: Glycyl cysteine thioester (Cys-Gly) (interchain with G-Cter in ubiquitin); alternate. A KxHxx motif is present at residues 219 to 225; the sequence is AEKSHQE.

Belongs to the INSIG family. Interacts with SCAP; interaction is direct and only takes place in the presence of sterols; it prevents interaction between SCAP and the coat protein complex II (COPII). Associates with the SCAP-SREBP complex (composed of SCAP and SREBF1/SREBP1 or SREBF2/SREBP2); association is mediated via its interaction with SCAP and only takes place in the presence of sterols. Interacts with RNF139. Interacts with RNF145. Phosphorylation at Ser-151 by PCK1 reduces binding to oxysterol, disrupting the interaction between INSIG2 and SCAP, thereby promoting nuclear translocation of SREBP proteins (SREBF1/SREBP1 or SREBF2/SREBP2) and subsequent transcription of downstream lipogenesis-related genes. Post-translationally, polyubiquitinated by AMFR/gp78 at Cys-215 in some tissues such as adipose tissues, undifferentiated myoblasts and liver, leading to its degradation. In differentiated myotubes, Cys-215 oxidation prevents ubiquitination at the same site, resulting in protein stabilization. In terms of processing, oxidized at Cys-215 in differentiated myotubes, preventing ubiquitination at the same site, and resulting in protein stabilization.

The protein localises to the endoplasmic reticulum membrane. Oxysterol-binding protein that mediates feedback control of cholesterol synthesis by controlling both endoplasmic reticulum to Golgi transport of SCAP and degradation of HMGCR. Acts as a negative regulator of cholesterol biosynthesis by mediating the retention of the SCAP-SREBP complex in the endoplasmic reticulum, thereby blocking the processing of sterol regulatory element-binding proteins (SREBPs) SREBF1/SREBP1 and SREBF2/SREBP2. Binds oxysterol, including 22-hydroxycholesterol, 24-hydroxycholesterol, 25-hydroxycholesterol and 27-hydroxycholesterol, regulating interaction with SCAP and retention of the SCAP-SREBP complex in the endoplasmic reticulum. In presence of oxysterol, interacts with SCAP, retaining the SCAP-SREBP complex in the endoplasmic reticulum, thereby preventing SCAP from escorting SREBF1/SREBP1 and SREBF2/SREBP2 to the Golgi. Sterol deprivation or phosphorylation by PCK1 reduce oxysterol-binding, disrupting the interaction between INSIG2 and SCAP, thereby promoting Golgi transport of the SCAP-SREBP complex, followed by processing and nuclear translocation of SREBF1/SREBP1 and SREBF2/SREBP2. Also regulates cholesterol synthesis by regulating degradation of HMGCR: initiates the sterol-mediated ubiquitin-mediated endoplasmic reticulum-associated degradation (ERAD) of HMGCR via recruitment of the reductase to the ubiquitin ligase RNF139. In Pongo abelii (Sumatran orangutan), this protein is Insulin-induced gene 2 protein.